A 400-amino-acid chain; its full sequence is uncharacterized protein (400 aa).

The protein to M.jannaschii MJ1544 and MJ1637.

This is an uncharacterized protein from Haemophilus influenzae (strain ATCC 51907 / DSM 11121 / KW20 / Rd).